The primary structure comprises 118 residues: Putative pterin-4-alpha-carbinolamine dehydratase (118 aa).

The protein belongs to the pterin-4-alpha-carbinolamine dehydratase family.

The enzyme catalyses (4aS,6R)-4a-hydroxy-L-erythro-5,6,7,8-tetrahydrobiopterin = (6R)-L-erythro-6,7-dihydrobiopterin + H2O. This chain is Putative pterin-4-alpha-carbinolamine dehydratase, found in Xanthomonas oryzae pv. oryzae (strain PXO99A).